The following is a 31-amino-acid chain: Spectrin beta chain, non-erythrocytic 1 (31 aa).

Spectrin repeat units follow at residues V1 to K10, Y11 to R19, and T20 to K31. Position 27 is a phosphotyrosine (Y27).

The protein belongs to the spectrin family. As to quaternary structure, interacts with ANK2. Interacts with CPNE4 (via VWFA domain). Like erythrocyte spectrin, the spectrin-like proteins are capable to form dimers which can further associate to tetramers. Associates with the gamma-tubulin complex in brain, but not in kidney, liver, sperm, or uterus. Interacts with CAMSAP1. Can form heterodimers with SPTAN1.

It is found in the cytoplasm. Its subcellular location is the cytoskeleton. The protein localises to the myofibril. It localises to the sarcomere. The protein resides in the m line. It is found in the cytosol. Its subcellular location is the cell membrane. In terms of biological role, fodrin, which seems to be involved in secretion, interacts with calmodulin in a calcium-dependent manner and is thus candidate for the calcium-dependent movement of the cytoskeleton at the membrane. Plays a critical role in central nervous system development and function. In Capra hircus (Goat), this protein is Spectrin beta chain, non-erythrocytic 1 (SPTBN1).